The following is a 281-amino-acid chain: Inhibitor of growth protein 2 (281 aa).

Positions 49-101 (VLRELDNKYQETLKEIDDVYEKYKKEDDSNQKKRLQQHLQRALINSQELGDEK) form a coiled coil. Residues 123 to 204 (SQCFQDPAES…AKQEREASPV (82 aa)) form a disordered region. Basic and acidic residues predominate over residues 131 to 141 (ESERASDKSKM). A compositionally biased stretch (basic residues) spans 182–194 (KRSKSAKKKKRSK). Residue Lys196 forms a Glycyl lysine isopeptide (Lys-Gly) (interchain with G-Cter in SUMO1) linkage. The PHD-type zinc-finger motif lies at 213 to 262 (PTYCLCNQVSYGEMIGCDNEQCPIEWFHFSCVSLTYKPKGKWYCPKCRGD). Zn(2+) is bound by residues Cys216, Cys218, Cys229, Cys234, His240, Cys243, Cys256, and Cys259. Residues 261–275 (GDNEKTMDKSTEKTK) show a composition bias toward basic and acidic residues. The interval 261 to 281 (GDNEKTMDKSTEKTKKERRAR) is disordered. Residues 265-281 (KTMDKSTEKTKKERRAR) are PBR.

It belongs to the ING family. As to quaternary structure, interacts with H3K4me3 and to a lesser extent with H3K4me2. Component of a mSin3A-like complex at least consisting of SIN3A, HDAC1, HDAC2, RBBP4/RbAp48, RBBP7/RbAp46, SAP30 and ING2. In terms of processing, sumoylation enhances its association with SIN3A and is required for binding to some target gene promoters, this is the case for TMEM71.

The protein resides in the nucleus. Its function is as follows. Seems to be involved in p53/TP53 activation and p53/TP53-dependent apoptotic pathways, probably by enhancing acetylation of p53/TP53. Component of a mSin3A-like corepressor complex, which is probably involved in deacetylation of nucleosomal histones. ING2 activity seems to be modulated by binding to phosphoinositides (PtdInsPs). This chain is Inhibitor of growth protein 2 (Ing2), found in Mus musculus (Mouse).